A 494-amino-acid polypeptide reads, in one-letter code: Glutamate--tRNA ligase (494 aa).

The short motif at 15 to 25 (PSPTGNPHVGL) is the 'HIGH' region element. Positions 112, 114, 139, and 141 each coordinate Zn(2+). A 'KMSKS' region motif is present at residues 260-264 (KLSKR). Residue Lys-263 coordinates ATP.

It belongs to the class-I aminoacyl-tRNA synthetase family. Glutamate--tRNA ligase type 1 subfamily. As to quaternary structure, monomer. Zn(2+) is required as a cofactor.

It localises to the cytoplasm. The catalysed reaction is tRNA(Glu) + L-glutamate + ATP = L-glutamyl-tRNA(Glu) + AMP + diphosphate. In terms of biological role, catalyzes the attachment of glutamate to tRNA(Glu) in a two-step reaction: glutamate is first activated by ATP to form Glu-AMP and then transferred to the acceptor end of tRNA(Glu). This is Glutamate--tRNA ligase from Streptomyces coelicolor (strain ATCC BAA-471 / A3(2) / M145).